Reading from the N-terminus, the 282-residue chain is NH(3)-dependent NAD(+) synthetase (282 aa).

ATP is bound at residue 51-58 (GISGGVDS). A Mg(2+)-binding site is contributed by D57. R148 provides a ligand contact to deamido-NAD(+). Residue T168 participates in ATP binding. E173 provides a ligand contact to Mg(2+). Deamido-NAD(+) is bound by residues K181 and D188. ATP contacts are provided by K197 and T219. Position 268-269 (268-269 (HK)) interacts with deamido-NAD(+).

It belongs to the NAD synthetase family. Homodimer.

The catalysed reaction is deamido-NAD(+) + NH4(+) + ATP = AMP + diphosphate + NAD(+) + H(+). It functions in the pathway cofactor biosynthesis; NAD(+) biosynthesis; NAD(+) from deamido-NAD(+) (ammonia route): step 1/1. Its function is as follows. Catalyzes the ATP-dependent amidation of deamido-NAD to form NAD. Uses ammonia as a nitrogen source. The polypeptide is NH(3)-dependent NAD(+) synthetase (Burkholderia cenocepacia (strain ATCC BAA-245 / DSM 16553 / LMG 16656 / NCTC 13227 / J2315 / CF5610) (Burkholderia cepacia (strain J2315))).